Consider the following 227-residue polypeptide: Spore coat protein O (227 aa).

Residues 1 to 10 (MKMSNKKRNA) show a composition bias toward basic residues. The disordered stretch occupies residues 1–157 (MKMSNKKRNA…PARKVKKPMS (157 aa)). Composition is skewed to basic and acidic residues over residues 35–60 (VIKR…KQQE), 85–100 (EARE…EQKA), and 108–147 (TVEH…EKAP).

It localises to the spore coat. In terms of biological role, has an important morphogenetic role. Involved in the assembly of at least five coat proteins, including CotB, CotG, CotS, CotSA and CotW. Required for appearance of a morphologically normal outer coat. To a large degree, CotO and CotH act at a late stage of coat assembly from within the outer coat to direct maturation of this structure. The chain is Spore coat protein O (cotO) from Bacillus subtilis (strain 168).